The sequence spans 156 residues: Small ribosomal subunit protein uS7 (156 aa).

Belongs to the universal ribosomal protein uS7 family. As to quaternary structure, part of the 30S ribosomal subunit. Contacts proteins S9 and S11.

Its function is as follows. One of the primary rRNA binding proteins, it binds directly to 16S rRNA where it nucleates assembly of the head domain of the 30S subunit. Is located at the subunit interface close to the decoding center, probably blocks exit of the E-site tRNA. This chain is Small ribosomal subunit protein uS7, found in Rhizobium rhizogenes (strain K84 / ATCC BAA-868) (Agrobacterium radiobacter).